The primary structure comprises 110 residues: Small EDRK-rich factor 1 (110 aa).

Residues 1 to 30 (MARGNQRELARQKNMKKTQEISKGKRKEDS) show a composition bias toward basic and acidic residues. The disordered stretch occupies residues 1-61 (MARGNQRELA…GPHLPLKAPR (61 aa)). Residues 11 to 17 (RQKNMKK) are required for SNCA binding. The segment covering 34 to 50 (SQRKQSSGGQKSESKMS) has biased composition (low complexity).

Belongs to the SERF family. Interacts with SNCA; this interaction promotes the aggregation of SNCA. Isoform Long is predominantly expressed in heart, brain and skeletal muscle. Isoform Short and Isoform Long are expressed throughout the central nervous system, including spinal cord.

The protein localises to the cytoplasm. It localises to the cytosol. The protein resides in the nucleus. Positive regulator of amyloid protein aggregation and proteotoxicity. Induces conformational changes in amyloid proteins, such as APP, HTT, and SNCA, driving them into compact formations preceding the formation of aggregates. The protein is Small EDRK-rich factor 1 (SERF1A) of Homo sapiens (Human).